Here is a 363-residue protein sequence, read N- to C-terminus: FMNH(2)-dependent dimethylsulfone monooxygenase (363 aa).

This sequence belongs to the SsuD family.

It catalyses the reaction dimethyl sulfone + FMNH2 + O2 = methanesulfinate + FMN + formaldehyde + H2O + 2 H(+). Involved in the dimethyl sulfide degradation pathway. Catalyzes the oxidation of dimethylsulfone (DMSO2) to yield methanesulfinate, which is oxidized spontaneously to methanesulfonate in the presence of dioxygen and FMNH(2). In Pseudomonas putida (Arthrobacter siderocapsulatus), this protein is FMNH(2)-dependent dimethylsulfone monooxygenase.